Consider the following 84-residue polypeptide: Small ribosomal subunit protein bS16 (84 aa).

It belongs to the bacterial ribosomal protein bS16 family.

This is Small ribosomal subunit protein bS16 from Acaryochloris marina (strain MBIC 11017).